Here is a 196-residue protein sequence, read N- to C-terminus: DnaA initiator-associating protein DiaA (196 aa).

The 163-residue stretch at 34–196 folds into the SIS domain; sequence VVQSLLNGNK…DNTLFPHQEV (163 aa).

The protein belongs to the SIS family. DiaA subfamily. In terms of assembly, homotetramer; dimer of dimers.

Functionally, required for the timely initiation of chromosomal replication via direct interactions with the DnaA initiator protein. The sequence is that of DnaA initiator-associating protein DiaA from Erwinia tasmaniensis (strain DSM 17950 / CFBP 7177 / CIP 109463 / NCPPB 4357 / Et1/99).